A 397-amino-acid polypeptide reads, in one-letter code: Cell division protein DivIB (397 aa).

The Cytoplasmic segment spans residues 1–138; it reads MTTKDKGDQK…RIERIHLYRA (138 aa). Basic and acidic residues predominate over residues 24–37; sequence QEYLEKKSQEKASE. Positions 24–115 are disordered; it reads QEYLEKKSQE…DRTEKFIGQA (92 aa). Positions 74–103 are enriched in acidic residues; that stretch reads ASDDDETNESEESEDVEEPEEENIEESSDV. A helical transmembrane segment spans residues 139–159; it reads LPVLVISSLLILLSLYFITPL. The region spanning 160 to 231 is the POTRA domain; the sequence is GSLKNLVVTG…ITFKIQVTEY (72 aa). Over 160–397 the chain is Extracellular; that stretch reads GSLKNLVVTG…PSDVTDETNN (238 aa). A disordered region spans residues 360 to 397; the sequence is LVQKEEQDQEQEKEESSEETVPGETEAAPSDVTDETNN. Positions 366 to 377 are enriched in acidic residues; the sequence is QDQEQEKEESSE.

This sequence belongs to the FtsQ/DivIB family. DivIB subfamily.

Its subcellular location is the cell membrane. In terms of biological role, cell division protein that may be involved in stabilizing or promoting the assembly of the division complex. The chain is Cell division protein DivIB from Streptococcus gordonii (strain Challis / ATCC 35105 / BCRC 15272 / CH1 / DL1 / V288).